The primary structure comprises 264 residues: tRNA (guanine-N(7)-)-methyltransferase (264 aa).

The tract at residues 1-39 (MIHDDDPNAPGAPHDDATAAPASATRAAPAAGDDDDANP) is disordered. Low complexity predominate over residues 18–31 (TAAPASATRAAPAA). Glu-94, Glu-119, Asp-146, and Asp-169 together coordinate S-adenosyl-L-methionine. Residue Asp-169 is part of the active site. Substrate-binding positions include Lys-173, Asp-205, and 240–243 (TKFE).

Belongs to the class I-like SAM-binding methyltransferase superfamily. TrmB family.

The enzyme catalyses guanosine(46) in tRNA + S-adenosyl-L-methionine = N(7)-methylguanosine(46) in tRNA + S-adenosyl-L-homocysteine. It participates in tRNA modification; N(7)-methylguanine-tRNA biosynthesis. Catalyzes the formation of N(7)-methylguanine at position 46 (m7G46) in tRNA. The polypeptide is tRNA (guanine-N(7)-)-methyltransferase (Burkholderia mallei (strain ATCC 23344)).